Reading from the N-terminus, the 289-residue chain is uncharacterized protein (289 aa).

The interval 25-66 (GGSGDSQSAHTPSTSIHTQNNSTPNKNTSTPPVNVSNANNLE) is disordered. The segment covering 33–43 (AHTPSTSIHTQ) has biased composition (polar residues). Positions 44–59 (NNSTPNKNTSTPPVNV) are enriched in low complexity.

This is an uncharacterized protein from Haemophilus influenzae (strain ATCC 51907 / DSM 11121 / KW20 / Rd).